The chain runs to 753 residues: Rsm22-cox11 tandem protein 1, mitochondrial (753 aa).

The transit peptide at 1–39 (MPILTCRYKILFLYNLRNCFTFQNQRCLIPYGTTTTIRW) directs the protein to the mitochondrion. Residues Cys323, Cys329, Cys342, and Cys430 each coordinate [4Fe-4S] cluster. Residues 571–591 (IYYLVAISIFALGLTYAAVPL) form a helical membrane-spanning segment. Topologically, residues 592 to 753 (YRLFCSKTGY…TNGNLLTKLN (162 aa)) are mitochondrial intermembrane.

The protein in the N-terminal section; belongs to the methyltransferase superfamily. Rsm22 family. In the C-terminal section; belongs to the COX11/CtaG family. Associates with the mitochondrial ribosome (mitoribosome). Only transiently interacts with the mitoribosome. In terms of processing, specific enzymatic cleavages in vivo by mitochondrial processing peptidase (MPP) yield mature proteins including rsm22-1 and cox11-1.

The protein resides in the mitochondrion. It is found in the mitochondrion inner membrane. Mitochondrial ribosome (mitoribosome) assembly factor. Binds at the interface of the head and body domains of the mitochondrial small ribosomal subunit (mt-SSU), occluding the mRNA channel and preventing compaction of the head domain towards the body. Probable inactive methyltransferase: retains the characteristic folding and ability to bind S-adenosyl-L-methionine, but it probably lost its methyltransferase activity. In terms of biological role, exerts its effect at some terminal stage of cytochrome c oxidase synthesis, probably by being involved in the insertion of the copper B into subunit I. In Schizosaccharomyces pombe (strain 972 / ATCC 24843) (Fission yeast), this protein is Rsm22-cox11 tandem protein 1, mitochondrial (cox1101).